Here is a 546-residue protein sequence, read N- to C-terminus: Probable protein kinase UbiB (546 aa).

Residues 123–501 enclose the Protein kinase domain; it reads DFDETPLASA…SRRQGQARYL (379 aa). ATP contacts are provided by residues 129–137 and K152; that span reads LASASIAQV. The active-site Proton acceptor is D287. Helical transmembrane passes span 498 to 517 and 522 to 541; these read ARYL…FLLT and IEWG…LGWL.

Belongs to the ABC1 family. UbiB subfamily.

It localises to the cell inner membrane. The protein operates within cofactor biosynthesis; ubiquinone biosynthesis [regulation]. Is probably a protein kinase regulator of UbiI activity which is involved in aerobic coenzyme Q (ubiquinone) biosynthesis. In Aeromonas hydrophila subsp. hydrophila (strain ATCC 7966 / DSM 30187 / BCRC 13018 / CCUG 14551 / JCM 1027 / KCTC 2358 / NCIMB 9240 / NCTC 8049), this protein is Probable protein kinase UbiB.